A 173-amino-acid chain; its full sequence is Crossover junction endodeoxyribonuclease RuvC (173 aa).

Active-site residues include Asp8, Glu67, and Asp139. Mg(2+) is bound by residues Asp8, Glu67, and Asp139.

This sequence belongs to the RuvC family. Homodimer which binds Holliday junction (HJ) DNA. The HJ becomes 2-fold symmetrical on binding to RuvC with unstacked arms; it has a different conformation from HJ DNA in complex with RuvA. In the full resolvosome a probable DNA-RuvA(4)-RuvB(12)-RuvC(2) complex forms which resolves the HJ. Requires Mg(2+) as cofactor.

The protein localises to the cytoplasm. The enzyme catalyses Endonucleolytic cleavage at a junction such as a reciprocal single-stranded crossover between two homologous DNA duplexes (Holliday junction).. The RuvA-RuvB-RuvC complex processes Holliday junction (HJ) DNA during genetic recombination and DNA repair. Endonuclease that resolves HJ intermediates. Cleaves cruciform DNA by making single-stranded nicks across the HJ at symmetrical positions within the homologous arms, yielding a 5'-phosphate and a 3'-hydroxyl group; requires a central core of homology in the junction. The consensus cleavage sequence is 5'-(A/T)TT(C/G)-3'. Cleavage occurs on the 3'-side of the TT dinucleotide at the point of strand exchange. HJ branch migration catalyzed by RuvA-RuvB allows RuvC to scan DNA until it finds its consensus sequence, where it cleaves and resolves the cruciform DNA. The protein is Crossover junction endodeoxyribonuclease RuvC of Tolumonas auensis (strain DSM 9187 / NBRC 110442 / TA 4).